The primary structure comprises 464 residues: Tryprostatin B synthase (464 aa).

Residues M94 and E102 each contribute to the brevianamide F site. Dimethylallyl diphosphate is bound by residues R113, K201, and Y203. A brevianamide F-binding site is contributed by Y205. K294, Y296, Q380, Y382, Y446, and Y450 together coordinate dimethylallyl diphosphate.

It belongs to the tryptophan dimethylallyltransferase family.

It carries out the reaction brevianamide F + dimethylallyl diphosphate = tryprostatin B + diphosphate. It functions in the pathway mycotoxin biosynthesis. Its function is as follows. Brevianamide F prenyltransferase; part of the gene cluster that mediates the biosynthesis of fumitremorgins, indole alkaloids that carry not only intriguing chemical structures, but also interesting biological and pharmacological activities. The biosynthesis of fumitremorgin-type alkaloids begins by condensation of the two amino acids L-tryptophan and L-proline to brevianamide F, catalyzed by the non-ribosomal peptide synthetase ftmA. Brevianamide F is then prenylated by the prenyltransferase ftmPT1/ftmB in the presence of dimethylallyl diphosphate, resulting in the formation of tryprostatin B. The three cytochrome P450 monooxygenases, ftmP450-1/ftmC, ftmP450-2/ftmE and ftmP450-3/FtmG, are responsible for the conversion of tryprostatin B to 6-hydroxytryprostatin B, tryprostatin A to fumitremorgin C and fumitremorgin C to 12,13-dihydroxyfumitremorgin C, respectively. The putative methyltransferase ftmMT/ftmD is expected for the conversion of 6-hydroxytryprostatin B to tryprostatin A. FtmPT2/FtmH catalyzes the prenylation of 12,13-dihydroxyfumitre-morgin C in the presence of dimethylallyl diphosphate, resulting in the formation of fumitremorgin B. Fumitremorgin B is further converted to verruculogen by ftmOx1/ftmF via the insertion of an endoperoxide bond between the two prenyl moieties. In some fungal species, verruculogen is further converted to fumitremorgin A, but the enzymes involved in this step have not been identified yet. The polypeptide is Tryprostatin B synthase (Aspergillus fumigatus (Neosartorya fumigata)).